Here is a 494-residue protein sequence, read N- to C-terminus: Xylan glycosyltransferase MUCI21 (494 aa).

The Cytoplasmic portion of the chain corresponds to 1-40 (MRQNLKKVAQIKVDESKKLFPYVFRVKTSCGNCAKRSKPK). Residues 41-61 (LIYLLIFSLISSCFVFAPQLL) traverse the membrane as a helical; Signal-anchor for type II membrane protein segment. Residues 62–494 (CFPYPSALFL…LIDAYAKSIR (433 aa)) are Lumenal-facing. Residue asparagine 375 is glycosylated (N-linked (GlcNAc...) asparagine).

Belongs to the glycosyltransferase 61 family.

Its subcellular location is the golgi apparatus membrane. Its function is as follows. Glycosyletransferase required for the proper composition and structural properties of released seed coat mucilage. Required for the production of highly branched xylan polymers in seed coat mucilage. Facilitates the addition of xylose residues directly to the xylan backbone. Xylan with xylose side chains seems to be necessary for pectin attachment to the seed surface. Essential for xylan synthesis in seed coat epidermal (SCE) cells. This is Xylan glycosyltransferase MUCI21 from Arabidopsis thaliana (Mouse-ear cress).